Reading from the N-terminus, the 174-residue chain is NADH-quinone oxidoreductase subunit B (174 aa).

The [4Fe-4S] cluster site is built by cysteine 53, cysteine 54, cysteine 118, and cysteine 148.

The protein belongs to the complex I 20 kDa subunit family. NDH-1 is composed of 14 different subunits. Subunits NuoB, C, D, E, F, and G constitute the peripheral sector of the complex. Requires [4Fe-4S] cluster as cofactor.

The protein localises to the cell inner membrane. It carries out the reaction a quinone + NADH + 5 H(+)(in) = a quinol + NAD(+) + 4 H(+)(out). Its function is as follows. NDH-1 shuttles electrons from NADH, via FMN and iron-sulfur (Fe-S) centers, to quinones in the respiratory chain. Couples the redox reaction to proton translocation (for every two electrons transferred, four hydrogen ions are translocated across the cytoplasmic membrane), and thus conserves the redox energy in a proton gradient. This Ruegeria sp. (strain TM1040) (Silicibacter sp.) protein is NADH-quinone oxidoreductase subunit B.